The primary structure comprises 195 residues: uncharacterized protein (195 aa).

Residues 6–66 enclose the HTH tetR-type domain; that stretch reads VESRKRLLKA…ELITDFHSRV (61 aa). The H-T-H motif DNA-binding region spans 29–48; the sequence is KVSEIVKKAGFTQPSFYLYF.

This is an uncharacterized protein from Bacillus subtilis (strain 168).